The primary structure comprises 353 residues: Probable transport protein YPL264C (353 aa).

The Cytoplasmic portion of the chain corresponds to 1-16; sequence MTLQRISKDYLKPNYG. A helical membrane pass occupies residues 17–37; sequence LILLIVSYFFNSSMVVSTKVL. The 137-residue stretch at 24–160 folds into the EamA 1 domain; the sequence is YFFNSSMVVS…SFSGVVLIIR (137 aa). Residues 38-51 lie on the Extracellular side of the membrane; that stretch reads ENDPLETSQSRINP. Residues 52-69 form a helical membrane-spanning segment; sequence LQILLVRMSITYCCTLVY. Over 70 to 94 the chain is Cytoplasmic; that stretch reads MHWNKQSVPDIPWGPAPCRKWLILR. Residues 95 to 115 form a helical membrane-spanning segment; the sequence is GIMGFFGVFGMYFSLMYLSIS. A topological domain (extracellular) is located at residue aspartate 116. The chain crosses the membrane as a helical span at residues 117 to 137; the sequence is AVLITFMSPTLTIFLSFLLLG. Residues 138–144 lie on the Cytoplasmic side of the membrane; it reads EPFSKLE. A helical transmembrane segment spans residues 145–165; the sequence is ALGSLISFSGVVLIIRPTFLF. Residues 166–188 are Extracellular-facing; sequence GEQTQGQQSPQDDIVETQNPKLR. Residues 189–209 traverse the membrane as a helical segment; that stretch reads LIAIGVSLLGVCGLSSVYIII. Residues 200-326 enclose the EamA 2 domain; sequence CGLSSVYIII…IVSSTIWVIN (127 aa). The Cytoplasmic segment spans residues 210–218; sequence RYIGNKAHA. The helical transmembrane segment at 219-239 threads the bilayer; that stretch reads IMSVSYFSLVTTVVAALGVLL. The Extracellular segment spans residues 240-254; it reads IPSMSLQLPHSWKQW. A helical membrane pass occupies residues 255-275; sequence GLFLNLGISGFIHQILLTMGI. The Cytoplasmic portion of the chain corresponds to 276–282; it reads QRERAGR. Residues 283–303 form a helical membrane-spanning segment; it reads GSLMTYTQVIYAVFWDVVLFH. Position 304 (histidine 304) is a topological domain, extracellular. Residues 305–325 form a helical membrane-spanning segment; sequence WPNIWTWCGMAVIVSSTIWVI. Over 326-353 the chain is Cytoplasmic; the sequence is NMRASKQNVVATAELLSTSDFELDDLED.

It localises to the membrane. The sequence is that of Probable transport protein YPL264C from Saccharomyces cerevisiae (strain ATCC 204508 / S288c) (Baker's yeast).